The following is a 100-amino-acid chain: Small ribosomal subunit protein uS14c (100 aa).

It belongs to the universal ribosomal protein uS14 family. Part of the 30S ribosomal subunit.

It localises to the plastid. The protein resides in the chloroplast. Its function is as follows. Binds 16S rRNA, required for the assembly of 30S particles. This chain is Small ribosomal subunit protein uS14c, found in Cicer arietinum (Chickpea).